Reading from the N-terminus, the 804-residue chain is Phenylalanine--tRNA ligase beta subunit (804 aa).

The tRNA-binding domain occupies 38 to 148 (RAAFRAFTIA…ENAPVGTSFA (111 aa)). A B5 domain is found at 401-476 (HTARVIDFPV…RIHGINRIDP (76 aa)). Residues Asp454, Asp460, Glu463, and Glu464 each contribute to the Mg(2+) site. Positions 710–803 (SLFQSLKRDY…VAKQTGGVLR (94 aa)) constitute an FDX-ACB domain.

The protein belongs to the phenylalanyl-tRNA synthetase beta subunit family. Type 1 subfamily. As to quaternary structure, tetramer of two alpha and two beta subunits. It depends on Mg(2+) as a cofactor.

It is found in the cytoplasm. The enzyme catalyses tRNA(Phe) + L-phenylalanine + ATP = L-phenylalanyl-tRNA(Phe) + AMP + diphosphate + H(+). In Brucella abortus (strain 2308), this protein is Phenylalanine--tRNA ligase beta subunit.